The primary structure comprises 444 residues: Glutamate--tRNA ligase 2 (444 aa).

Residues 8–18 (PSPTGHLHAGN) carry the 'HIGH' region motif. The 'KMSKS' region motif lies at 241-245 (KLSKR). Lys244 provides a ligand contact to ATP.

It belongs to the class-I aminoacyl-tRNA synthetase family. Glutamate--tRNA ligase type 1 subfamily. As to quaternary structure, monomer.

It is found in the cytoplasm. It catalyses the reaction tRNA(Glu) + L-glutamate + ATP = L-glutamyl-tRNA(Glu) + AMP + diphosphate. Catalyzes the attachment of glutamate to tRNA(Glu) in a two-step reaction: glutamate is first activated by ATP to form Glu-AMP and then transferred to the acceptor end of tRNA(Glu). This is Glutamate--tRNA ligase 2 from Acidiphilium cryptum (strain JF-5).